The primary structure comprises 336 residues: Probable allantoicase (336 aa).

It belongs to the allantoicase family.

It carries out the reaction allantoate + H2O = (S)-ureidoglycolate + urea. It participates in nitrogen metabolism; (S)-allantoin degradation; (S)-ureidoglycolate from allantoate (aminidohydrolase route): step 1/1. The polypeptide is Probable allantoicase (Acinetobacter baumannii (strain SDF)).